The following is a 164-amino-acid chain: Phosphopantetheine adenylyltransferase (164 aa).

Residue S9 coordinates substrate. Residues 9–10 (SF) and H17 each bind ATP. Substrate-binding residues include K41, V78, and R92. Residues 93–95 (GLR), E103, and 128–134 (SRPITAT) each bind ATP.

Belongs to the bacterial CoaD family. Homohexamer. Mg(2+) serves as cofactor.

The protein resides in the cytoplasm. The catalysed reaction is (R)-4'-phosphopantetheine + ATP + H(+) = 3'-dephospho-CoA + diphosphate. The protein operates within cofactor biosynthesis; coenzyme A biosynthesis; CoA from (R)-pantothenate: step 4/5. Functionally, reversibly transfers an adenylyl group from ATP to 4'-phosphopantetheine, yielding dephospho-CoA (dPCoA) and pyrophosphate. The protein is Phosphopantetheine adenylyltransferase of Rhizobium etli (strain ATCC 51251 / DSM 11541 / JCM 21823 / NBRC 15573 / CFN 42).